Consider the following 222-residue polypeptide: Ribulose-phosphate 3-epimerase (222 aa).

Serine 7 serves as a coordination point for substrate. A divalent metal cation is bound by residues histidine 32, aspartate 34, and histidine 65. Aspartate 34 acts as the Proton acceptor in catalysis. Substrate is bound by residues histidine 65, 141–144 (GFSG), 174–176 (DGG), and 196–197 (GS). Aspartate 174 contributes to the a divalent metal cation binding site. The active-site Proton donor is the aspartate 174.

Belongs to the ribulose-phosphate 3-epimerase family. Requires a divalent metal cation as cofactor.

It carries out the reaction D-ribulose 5-phosphate = D-xylulose 5-phosphate. The protein operates within carbohydrate degradation. Catalyzes the reversible epimerization of D-ribulose 5-phosphate to D-xylulose 5-phosphate. The polypeptide is Ribulose-phosphate 3-epimerase (Aquifex aeolicus (strain VF5)).